A 635-amino-acid chain; its full sequence is Chaperone protein HtpG (635 aa).

Residues 1–343 (MSVETQKETL…SNDLSLNVSR (343 aa)) are a; substrate-binding. The tract at residues 344-560 (EILQKDPIID…EQDMGLQMRQ (217 aa)) is b. Residues 561–635 (ILEASGQKVP…LNKLLVELSV (75 aa)) are c.

The protein belongs to the heat shock protein 90 family. Homodimer.

The protein resides in the cytoplasm. In terms of biological role, molecular chaperone. Has ATPase activity. The polypeptide is Chaperone protein HtpG (Pseudomonas syringae pv. tomato (strain ATCC BAA-871 / DC3000)).